Consider the following 251-residue polypeptide: MPATVLITGGNRGLGKGLVATYLSTPDTTVIATVRDPSKCESLSALPKALGSNLLLVKLEVTSKDSITTAIGTLDTHNIGSIDVVIANAGISGPTSSLAEAPVSELQRYIDVNAYGPFELFKAVLPLLRSSNSGNKAKFVCISSAGGSLAAMYNFMPISAYGASKALANFLVKWLALDNKDIIIWAQNPGSVDTDMARDGLDLAKSLGFDLSSLSFTSPEESACAIKKLIDGATTEMSGKFLDHDGSELAW.

5 residues coordinate NADP(+): Leu14, Thr33, Glu60, Asn88, and Lys122. Residues Ser143 and Tyr161 each act as proton donor in the active site. The NADP(+) site is built by Tyr161, Lys165, Val192, and Thr194. Catalysis depends on Lys165, which acts as the Lowers pKa of active site Tyr.

Belongs to the short-chain dehydrogenases/reductases (SDR) family.

The protein operates within secondary metabolite biosynthesis; terpenoid biosynthesis. In terms of biological role, short chain dehydrogenase; part of the gene cluster that mediates the biosynthesis of griseofulvin, an important antifungal drug that has been in use for a long time for treating dermatophyte infections. The first step of the pathway is the formation of the heptaketide backbone by gsfA which is initiated by priming with acetyl-CoA, followed by sequential condensations of 6 malonyl-CoA units. The resulting benzophenone can undergo a spontaneous dehydration to form norlichexanthone. However, the true precursor for the griseofulvin biosynthesis is not norlichexanthone, but the heptaketide benzophenone that is O-methylated at 3-OH by gsfB to produce griseophenone D which is further methylated at 9-OH by gsfC to yield griseophenone C. Griseophenone C is then substrate of halogenase gsfI which is responsible for the regio-specific chlorination at the C13 position to form griseophenone B. The cytochrome P450 gsfF catalyzes the coupling of orcinol and phloroglucinol rings in griseophenone B to form desmethyl-dehydrogriseofulvin A which is further methylated at 5-OH by gsfD to yield dehydrogriseofulvin. Finally, gsfE performs stereospecific reduction of enone 18 of dehydrogriseofulvin to afford the final product griseofulvin. The exact role of gsfK within the pathway has not been identified yet. The protein is Short chain dehydrogenase gsfK of Penicillium aethiopicum.